The chain runs to 94 residues: Large ribosomal subunit protein eL43B (94 aa).

The C4-type zinc-finger motif lies at 39 to 62; the sequence is CPFCGRLTVKRTAAGIWKCSGKGC.

It belongs to the eukaryotic ribosomal protein eL43 family. Component of the large ribosomal subunit (LSU). Mature yeast ribosomes consist of a small (40S) and a large (60S) subunit. The 40S small subunit contains 1 molecule of ribosomal RNA (18S rRNA) and at least 33 different proteins. The large 60S subunit contains 3 rRNA molecules (25S, 5.8S and 5S rRNA) and at least 46 different proteins.

Its subcellular location is the cytoplasm. In terms of biological role, component of the ribosome, a large ribonucleoprotein complex responsible for the synthesis of proteins in the cell. The small ribosomal subunit (SSU) binds messenger RNAs (mRNAs) and translates the encoded message by selecting cognate aminoacyl-transfer RNA (tRNA) molecules. The large subunit (LSU) contains the ribosomal catalytic site termed the peptidyl transferase center (PTC), which catalyzes the formation of peptide bonds, thereby polymerizing the amino acids delivered by tRNAs into a polypeptide chain. The nascent polypeptides leave the ribosome through a tunnel in the LSU and interact with protein factors that function in enzymatic processing, targeting, and the membrane insertion of nascent chains at the exit of the ribosomal tunnel. The sequence is that of Large ribosomal subunit protein eL43B (rpl4302) from Schizosaccharomyces pombe (strain 972 / ATCC 24843) (Fission yeast).